Reading from the N-terminus, the 296-residue chain is Ribonuclease HIII (296 aa).

The region spanning 81-296 is the RNase H type-2 domain; that stretch reads QAMIGTDEVG…TQKAKQLLER (216 aa). Residues Asp87, Glu88, and Asp190 each contribute to the a divalent metal cation site.

The protein belongs to the RNase HII family. RnhC subfamily. Requires Mn(2+) as cofactor. It depends on Mg(2+) as a cofactor.

The protein localises to the cytoplasm. It catalyses the reaction Endonucleolytic cleavage to 5'-phosphomonoester.. In terms of biological role, endonuclease that specifically degrades the RNA of RNA-DNA hybrids. In Streptococcus gordonii (strain Challis / ATCC 35105 / BCRC 15272 / CH1 / DL1 / V288), this protein is Ribonuclease HIII.